A 274-amino-acid polypeptide reads, in one-letter code: MPQGEVSFFEVLTTAPFSHELSKKHIAQTQYAAFWISMAYVVVIFGLKAVMTNRKPFDLTGPLNLWNAGLAIFSTLGSLATTFGLLHEFFSRGFFESYIHIGDFYNGLSGMFTWLFVLSKVAEFGDTLFIILRKKPLMFLHWYHHVLTMNYAFMSFEANLGFNTWITWMNFSVHSIMYGYYMLRSFGVKVPAWIAKNITTMQILQFVITHFILFHVGYLAVTGQSVDSTPGYYWFCLLMEISYVVLFGNFYYQSYIKGGGKKFNAEKKTEKKIE.

The Extracellular portion of the chain corresponds to methionine 1–glutamine 30. The helical transmembrane segment at tyrosine 31 to methionine 51 threads the bilayer. Residues threonine 52 to glycine 69 lie on the Cytoplasmic side of the membrane. Residues leucine 70–phenylalanine 90 traverse the membrane as a helical segment. The Extracellular segment spans residues serine 91–methionine 111. The chain crosses the membrane as a helical span at residues phenylalanine 112 to leucine 132. Over arginine 133–lysine 135 the chain is Cytoplasmic. A helical membrane pass occupies residues proline 136–phenylalanine 156. Residues glutamate 157 to asparagine 159 lie on the Extracellular side of the membrane. The helical transmembrane segment at leucine 160 to tyrosine 180 threads the bilayer. The Cytoplasmic portion of the chain corresponds to tyrosine 181 to glutamine 202. Residues isoleucine 203–glycine 223 traverse the membrane as a helical segment. Topologically, residues glutamine 224 to proline 230 are extracellular. Residues glycine 231 to tyrosine 251 traverse the membrane as a helical segment. The Cytoplasmic segment spans residues tyrosine 252 to glutamate 274.

It belongs to the ELO family. As to expression, expressed in the gut, neurons, pharynx and muscles of the vulva.

Its subcellular location is the membrane. The catalysed reaction is isopentadecanoyl-CoA + malonyl-CoA + H(+) = 3-oxoisoheptadecanoyl-CoA + CO2 + CoA. It participates in lipid metabolism; fatty acid biosynthesis. Its function is as follows. Catalyzes the first and rate-limiting reaction of the four reactions that constitute the long-chain fatty acids elongation cycle. Uses malonyl-CoA to add 2 carbons per cycle to the chain of long-chain fatty acids. Condensing enzyme required for the formation of isoheptadecanoate (C17iso), which plays critical roles in animal development and growth. The chain is Long chain fatty acid elongase 6 (elo-6) from Caenorhabditis elegans.